The following is a 211-amino-acid chain: Dual specificity protein phosphatase 26 (211 aa).

In terms of domain architecture, Tyrosine-protein phosphatase spans 60-207 (NHADEVWPGL…LLALDRRLRQ (148 aa)). The Phosphocysteine intermediate role is filled by Cys152.

The protein belongs to the protein-tyrosine phosphatase family. Non-receptor class dual specificity subfamily. In terms of assembly, interacts with HSF4.

The protein resides in the cytoplasm. Its subcellular location is the nucleus. It localises to the golgi apparatus. It catalyses the reaction O-phospho-L-tyrosyl-[protein] + H2O = L-tyrosyl-[protein] + phosphate. The catalysed reaction is O-phospho-L-seryl-[protein] + H2O = L-seryl-[protein] + phosphate. It carries out the reaction O-phospho-L-threonyl-[protein] + H2O = L-threonyl-[protein] + phosphate. In terms of biological role, inactivates MAPK1 and MAPK3 which leads to dephosphorylation of heat shock factor protein 4 and a reduction in its DNA-binding activity. The polypeptide is Dual specificity protein phosphatase 26 (Dusp26) (Rattus norvegicus (Rat)).